The chain runs to 444 residues: Spermatogenesis-associated protein 1 (444 aa).

Residues 145–160 (GTIHRPDSLSLSKDEP) are compositionally biased toward basic and acidic residues. A disordered region spans residues 145-229 (GTIHRPDSLS…DEGEEDDKAT (85 aa)). Residues 268-403 (SLLKIEREKI…RKLDTDKMKL (136 aa)) adopt a coiled-coil conformation.

As to quaternary structure, interacts with IFT20.

Its subcellular location is the cytoplasmic vesicle. It is found in the secretory vesicle. The protein localises to the acrosome. The sequence is that of Spermatogenesis-associated protein 1 (Spata1) from Rattus norvegicus (Rat).